Here is a 636-residue protein sequence, read N- to C-terminus: MHLSEITHPNQLHGLSVAQLEQIGHQIREKHLQTVAATGGHLGPGLGVVELTLALYQTLDLDRDKVVWDVGHQAYPHKLLTGRYHNFHTLRQKDGIAGYLKRTENRFDHFGAGHASTSISAALGMALARDAQGEDYRCVAVIGDGSLTGGMALEAINHAGHLPKTRLLVVLNDNDMSISPNVGALSRYLNKIRVSEPMQLLTDGLTQGMQQIPFVGGAITQGFEPVKEGMKRLSYSKIGAVFEELGFTYMGPVDGHNLEELIATFREAHKHTGPVLVHVATTKGKGYPYAEEDQVGYHAQNPFDLATGKAKPASKPKPPSHSKVFGQTLTTLAKSDRRIVGITAAMATGTGLDILQKALPKQYIDVGIAEQHAVVLAAGMACDGMRPVVAIYSTFLQRAFDQVIHDVCIQKLPVFFCLDRAGIVGADGPTHQGMYDIAYLRLIPNMVLMAPKDEAELQRMLVTGIEYDGPIAMRFPRGNGIGVPLPEEGWESLPIGKAEQLRQGDDLLMLAYGSMVYPALQTAELLNEHGISATVINARFAKPLDEELIVPLARQIGKVVTFEEGCLPGGFGSAIMESLQAHDLQVPVLPIGVPDLLVEHASPDESKQELGLTPRQMADRILEKFGSRQRIGAASA.

Residues histidine 72 and 113-115 each bind thiamine diphosphate; that span reads GHA. Aspartate 144 contacts Mg(2+). Thiamine diphosphate is bound by residues 145–146, asparagine 174, tyrosine 287, and glutamate 370; that span reads GS. Asparagine 174 is a Mg(2+) binding site.

The protein belongs to the transketolase family. DXPS subfamily. Homodimer. Requires Mg(2+) as cofactor. Thiamine diphosphate serves as cofactor.

It catalyses the reaction D-glyceraldehyde 3-phosphate + pyruvate + H(+) = 1-deoxy-D-xylulose 5-phosphate + CO2. Its pathway is metabolic intermediate biosynthesis; 1-deoxy-D-xylulose 5-phosphate biosynthesis; 1-deoxy-D-xylulose 5-phosphate from D-glyceraldehyde 3-phosphate and pyruvate: step 1/1. Catalyzes the acyloin condensation reaction between C atoms 2 and 3 of pyruvate and glyceraldehyde 3-phosphate to yield 1-deoxy-D-xylulose-5-phosphate (DXP). The polypeptide is 1-deoxy-D-xylulose-5-phosphate synthase (Synechococcus sp. (strain ATCC 27144 / PCC 6301 / SAUG 1402/1) (Anacystis nidulans)).